The following is a 692-amino-acid chain: Elongation factor G (692 aa).

Residues 8-283 enclose the tr-type G domain; sequence NRIRNIGIAA…AVIDYLPAPT (276 aa). GTP-binding positions include 17-24, 81-85, and 135-138; these read AHIDAGKT, DTPGH, and NKMD.

This sequence belongs to the TRAFAC class translation factor GTPase superfamily. Classic translation factor GTPase family. EF-G/EF-2 subfamily.

The protein resides in the cytoplasm. In terms of biological role, catalyzes the GTP-dependent ribosomal translocation step during translation elongation. During this step, the ribosome changes from the pre-translocational (PRE) to the post-translocational (POST) state as the newly formed A-site-bound peptidyl-tRNA and P-site-bound deacylated tRNA move to the P and E sites, respectively. Catalyzes the coordinated movement of the two tRNA molecules, the mRNA and conformational changes in the ribosome. This is Elongation factor G (fusA) from Helicobacter pylori (strain ATCC 700392 / 26695) (Campylobacter pylori).